A 317-amino-acid chain; its full sequence is Olfactory receptor 10A5 (317 aa).

Residues 1–26 (MAIGNWTEISEFILMSFSSLPTEIQS) lie on the Extracellular side of the membrane. Asn5 carries an N-linked (GlcNAc...) asparagine glycan. Residues 27-47 (LLFLTFLTIYLVTLKGNSLII) traverse the membrane as a helical segment. The Cytoplasmic portion of the chain corresponds to 48 to 55 (LVTLADPM). A helical membrane pass occupies residues 56–76 (LHSPMYFFLRNLSFLEIGFNL). Residues 77 to 100 (VIVPKMLGTLLAQDTTISFLGCAT) lie on the Extracellular side of the membrane. A disulfide bridge links Cys98 with Cys190. A helical transmembrane segment spans residues 101-121 (QMYFFFFFGVAECFLLATMAY). The Cytoplasmic segment spans residues 122-140 (DRYVAICSPLHYPVIMNQR). A helical membrane pass occupies residues 141–161 (TRAKLAAASWFPGFPVATVQT). The Extracellular portion of the chain corresponds to 162–198 (TWLFSFPFCGTNKVNHFFCDSPPVLKLVCADTALFEI). Residues 199 to 218 (YAIVGTILVVMIPCLLILCS) form a helical membrane-spanning segment. Topologically, residues 219 to 238 (YTRIAAAILKIPSAKGKHKA) are cytoplasmic. A helical transmembrane segment spans residues 239–259 (FSTCSSHLLVVSLFYISSSLT). At 260–272 (YFWPKSNNSPESK) the chain is on the extracellular side. The helical transmembrane segment at 273 to 293 (KLLSLSYTVVTPMLNPIIYSL) threads the bilayer. At 294–317 (RNSEVKNALSRTFHKVLALRNCIP) the chain is on the cytoplasmic side.

This sequence belongs to the G-protein coupled receptor 1 family. In terms of tissue distribution, expressed in the tongue.

It localises to the cell membrane. In terms of biological role, odorant receptor (Potential). May be involved in taste perception. The polypeptide is Olfactory receptor 10A5 (OR10A5) (Homo sapiens (Human)).